Reading from the N-terminus, the 255-residue chain is Acetylglutamate kinase (255 aa).

Substrate-binding positions include Gly40–Gly41, Arg62, and Asn153.

It belongs to the acetylglutamate kinase family. ArgB subfamily.

Its subcellular location is the cytoplasm. The enzyme catalyses N-acetyl-L-glutamate + ATP = N-acetyl-L-glutamyl 5-phosphate + ADP. It participates in amino-acid biosynthesis; L-arginine biosynthesis; N(2)-acetyl-L-ornithine from L-glutamate: step 2/4. Its function is as follows. Catalyzes the ATP-dependent phosphorylation of N-acetyl-L-glutamate. This is Acetylglutamate kinase from Bacillus cereus (strain AH187).